The primary structure comprises 478 residues: BTB/POZ domain-containing protein 17 (478 aa).

The signal sequence occupies residues 1-28 (MLRKGSCKPGSWGSFWAILALVGLVTRA). 4 N-linked (GlcNAc...) asparagine glycosylation sites follow: Asn-61, Asn-100, Asn-195, and Asn-307. One can recognise a BTB domain in the interval 63-132 (SDVILRVQAV…LYCGELTVLL (70 aa)). The 101-residue stretch at 169–269 (AVGWYHYAVS…IPPAQLFQLQ (101 aa)) folds into the BACK domain.

The protein localises to the secreted. This Mus musculus (Mouse) protein is BTB/POZ domain-containing protein 17 (Btbd17).